The sequence spans 269 residues: Probable aquaporin TIP5-1 (269 aa).

5 helical membrane passes run Ala-19 to Ile-39, Ser-54 to Ala-74, Ala-84 to Trp-104, Phe-139 to Ala-159, and Ala-177 to Leu-197. Residues Asn-82 to Ala-84 carry the NPA 1 motif. Positions Asn-203 to Ala-205 match the NPA 2 motif. A helical transmembrane segment spans residues Tyr-223 to Phe-243.

It belongs to the MIP/aquaporin (TC 1.A.8) family. TIP (TC 1.A.8.10) subfamily. Expressed in leaves and anthers, and at lower levels in roots.

The protein localises to the vacuole membrane. Its function is as follows. Aquaporins facilitate the transport of water and small neutral solutes across cell membranes. May be involved in transport from the vacuolar compartment to the cytoplasm. The chain is Probable aquaporin TIP5-1 (TIP5;1) from Oryza sativa subsp. japonica (Rice).